Consider the following 324-residue polypeptide: MVTEPLTKPALVAVDMRPARRGERLFKLAASAAGSTIVIAILLIAIFLLVRAVPSLRANHANFFTSTQFDTSDDEQLAFGVRDLFMVTALSSITALVLAVPVAVGIAVFLTHYAPRRLSRPFGAMVDLLAAVPSIIFGLWGIFVLAPKLEPIARFLNRNLGWLFLFKQGNVSLAGGGTIFTAGIVLSVMILPIVTSISREVFRQTPLIQIEAALALGATKWEVVRMTVLPYGRSGVVAASMLGLGRALGETVAVLVILRSAARPGTWSLFDGGYTFASKIASAASEFSEPLPTGAYISAGFALFVLTFLVNAAARAIAGGKVNG.

6 consecutive transmembrane segments (helical) span residues 30-50 (ASAA…FLLV), 90-110 (LSSI…AVFL), 125-145 (MVDL…IFVL), 174-194 (AGGG…LPIV), 237-257 (VAAS…VLVI), and 290-310 (PLPT…TFLV). The region spanning 85 to 314 (FMVTALSSIT…VLTFLVNAAA (230 aa)) is the ABC transmembrane type-1 domain.

This sequence belongs to the binding-protein-dependent transport system permease family. CysTW subfamily.

It localises to the cell membrane. In terms of biological role, part of the binding-protein-dependent transport system for phosphate; probably responsible for the translocation of the substrate across the membrane. The polypeptide is Phosphate transport system permease protein PstC 2 (pstC2) (Mycobacterium bovis (strain ATCC BAA-935 / AF2122/97)).